We begin with the raw amino-acid sequence, 69 residues long: UPF0437 protein AZC_3451 (69 aa).

Belongs to the UPF0437 family.

The sequence is that of UPF0437 protein AZC_3451 from Azorhizobium caulinodans (strain ATCC 43989 / DSM 5975 / JCM 20966 / LMG 6465 / NBRC 14845 / NCIMB 13405 / ORS 571).